The primary structure comprises 520 residues: Glucose-1-phosphate adenylyltransferase small subunit, chloroplastic (520 aa).

The N-terminal 71 residues, 1–71 (MASVSAIGVL…RNPIIVSPKA (71 aa)), are a transit peptide targeting the chloroplast.

The protein belongs to the bacterial/plant glucose-1-phosphate adenylyltransferase family. As to quaternary structure, heterotetramer. In terms of tissue distribution, leaves.

Its subcellular location is the plastid. It is found in the chloroplast. The enzyme catalyses alpha-D-glucose 1-phosphate + ATP + H(+) = ADP-alpha-D-glucose + diphosphate. It participates in glycan biosynthesis; starch biosynthesis. Activated by 3'phosphoglycerate, inhibited by orthophosphate. Allosteric regulation. Functionally, this protein plays a role in synthesis of starch. It catalyzes the synthesis of the activated glycosyl donor, ADP-glucose from Glc-1-P and ATP. This is Glucose-1-phosphate adenylyltransferase small subunit, chloroplastic (APS1) from Arabidopsis thaliana (Mouse-ear cress).